A 271-amino-acid polypeptide reads, in one-letter code: MEAAAEPGNLAGVRHIVLVLSGKGGVGKSTISTELALALRHAGKKVGILDVDLCGPSIPRMLRAQGRAVHQGDSGWVPVFVDREQSISLMSVGFLLEQPDEAVVWRGPKKNALIKQFVSDVAWGQLDYLLVDTPPGTSDEHMAVVDALRPHSPLGALVVTTPQAVSVGDVRRELTFCRKVGLRVIGLVENMSGFVCPHCSECTNVFSKGGGEELARHAGVPFLGSVPLDPELTRSLEDGRDFIQDFPDSPAFPALSSIAQKILSETPAGLS.

Met1 is modified (N-acetylmethionine). Residue 22–29 (GKGGVGKS) coordinates ATP. The [4Fe-4S] cluster site is built by Cys196 and Cys199.

This sequence belongs to the Mrp/NBP35 ATP-binding proteins family. NUBP2/CFD1 subfamily. In terms of assembly, heterotetramer of 2 NUBP1 and 2 NUBP2 chains. Interacts with KIFC1. Interacts with NUBP1. It depends on [4Fe-4S] cluster as a cofactor.

It localises to the nucleus. It is found in the cytoplasm. The protein resides in the cytoskeleton. The protein localises to the microtubule organizing center. Its subcellular location is the centrosome. It localises to the cilium axoneme. It is found in the centriole. In terms of biological role, component of the cytosolic iron-sulfur (Fe/S) protein assembly (CIA) machinery. Required for maturation of extramitochondrial Fe-S proteins. The NUBP1-NUBP2 heterotetramer forms a Fe-S scaffold complex, mediating the de novo assembly of an Fe-S cluster and its transfer to target apoproteins. Negatively regulates cilium formation and structure. The polypeptide is Cytosolic Fe-S cluster assembly factor NUBP2 (Bos taurus (Bovine)).